The primary structure comprises 294 residues: Phosphatidylglycerol--prolipoprotein diacylglyceryl transferase (294 aa).

Helical transmembrane passes span 10-30, 55-75, 91-111, 119-139, 196-216, 224-244, and 258-278; these read VALA…LLAF, LVFY…VLFY, WEGG…MWFF, AFQV…FGRI, PSQL…LWWY, MAAS…IEFF, and WMTK…IMLI. R138 serves as a coordination point for a 1,2-diacyl-sn-glycero-3-phospho-(1'-sn-glycerol).

It belongs to the Lgt family.

It localises to the cell inner membrane. The enzyme catalyses L-cysteinyl-[prolipoprotein] + a 1,2-diacyl-sn-glycero-3-phospho-(1'-sn-glycerol) = an S-1,2-diacyl-sn-glyceryl-L-cysteinyl-[prolipoprotein] + sn-glycerol 1-phosphate + H(+). It functions in the pathway protein modification; lipoprotein biosynthesis (diacylglyceryl transfer). In terms of biological role, catalyzes the transfer of the diacylglyceryl group from phosphatidylglycerol to the sulfhydryl group of the N-terminal cysteine of a prolipoprotein, the first step in the formation of mature lipoproteins. The protein is Phosphatidylglycerol--prolipoprotein diacylglyceryl transferase of Psychrobacter arcticus (strain DSM 17307 / VKM B-2377 / 273-4).